Reading from the N-terminus, the 710-residue chain is Early transcription factor 82 kDa subunit (710 aa).

It belongs to the poxviridae VETF large subunit family. Heterodimer of a 70 kDa and a 82 kDa subunit. Part of the early transcription complex composed of ETF, RAP94/OPG109, and the DNA-directed RNA polymerase.

It localises to the virion. Functionally, acts with RNA polymerase to initiate transcription from early gene promoters. Is recruited by the RPO-associated protein of 94 kDa RAP94/OPG109 to form the early transcription complex, which also contains the core RNA polymerase. ETF heterodimer binds to early gene promoters. In Bos taurus (Bovine), this protein is Early transcription factor 82 kDa subunit (OPG133).